We begin with the raw amino-acid sequence, 301 residues long: DSC E3 ubiquitin ligase complex subunit B (301 aa).

3 helical membrane-spanning segments follow: residues 9–29 (APIT…LSIL), 52–72 (LATW…AAML), and 90–110 (TFII…LVLL). Residues 268–284 (AAAAASGNAGSASEASG) show a composition bias toward low complexity. The segment at 268 to 301 (AAAAASGNAGSASEASGQRQRRREGGIMDRLRAL) is disordered. The span at 290 to 301 (REGGIMDRLRAL) shows a compositional bias: basic and acidic residues.

In terms of assembly, component of the DSC E3 ubiquitin ligase complex composed of dscA, dscB, dscC and dscD.

It is found in the endoplasmic reticulum membrane. The catalysed reaction is S-ubiquitinyl-[E2 ubiquitin-conjugating enzyme]-L-cysteine + [acceptor protein]-L-lysine = [E2 ubiquitin-conjugating enzyme]-L-cysteine + N(6)-ubiquitinyl-[acceptor protein]-L-lysine.. Its pathway is protein modification; protein ubiquitination. Functionally, component of the DSC E3 ubiquitin ligase complex which is required for the srbA transcriptional activator proteolytic cleavage to release the soluble transcription factor from the membrane in low oxygen or sterol conditions. Required for growth during hypoxia and triazole drug susceptibility, as well as for virulence in a murine model of invasive pulmonary aspergillosis (IPA). In Aspergillus fumigatus (strain ATCC MYA-4609 / CBS 101355 / FGSC A1100 / Af293) (Neosartorya fumigata), this protein is DSC E3 ubiquitin ligase complex subunit B.